The sequence spans 576 residues: MRASQFLFATLKETPSDADIVSSQLMLRAGLIRKLASGLYVWLPMGLKVLQKVEKIVREEMQNIGGQEVLMPMTQPAELWQESGRFEDYGPELLRFTDRHNRDFVLGPTHEEVITDLARGELRSYKQLPVTFFQIQGKFRDEIRPRFGIMRAREFTMKDAYSFHVDQASLEVTYQQMYDAYTRIFQRLGLNFRAVLADTGSIGGSASHEFHVLAGSGEDAIAFSDGSDYAANVELAEAICTDERAAPTQDKQNVSTPKIQTNEELAKFLDIPLHTTVKTLVVKGHRINEDGSEGDEQLVALVVRGDHTLNEIKAEKIAEVATPLTFATEEEMKAAGLKKGFIGVDLDMPVYVDRAAAALSDFVSGANEYDMHTTGMNWERDATITDVVDIRNVVEGDASPDGKGTLSIKRGIEVGHIFQLGDKYSKALNCTVMGEDGKPVTLMMGCYGIGVSRIIAAAIEQNHDDNGIIWAKTPDIKDSIAPFDIAIVPMKSKEDTVMQTAEALYEELKARGLNVILDDRNERPGVKFADLELIGIPHRIVVSDRNLAEDKYEYVDRRDGEKQLLSREELLAKVSL.

Belongs to the class-II aminoacyl-tRNA synthetase family. ProS type 1 subfamily. In terms of assembly, homodimer.

Its subcellular location is the cytoplasm. It catalyses the reaction tRNA(Pro) + L-proline + ATP = L-prolyl-tRNA(Pro) + AMP + diphosphate. Functionally, catalyzes the attachment of proline to tRNA(Pro) in a two-step reaction: proline is first activated by ATP to form Pro-AMP and then transferred to the acceptor end of tRNA(Pro). As ProRS can inadvertently accommodate and process non-cognate amino acids such as alanine and cysteine, to avoid such errors it has two additional distinct editing activities against alanine. One activity is designated as 'pretransfer' editing and involves the tRNA(Pro)-independent hydrolysis of activated Ala-AMP. The other activity is designated 'posttransfer' editing and involves deacylation of mischarged Ala-tRNA(Pro). The misacylated Cys-tRNA(Pro) is not edited by ProRS. This is Proline--tRNA ligase from Psychrobacter sp. (strain PRwf-1).